The following is a 374-amino-acid chain: Putative glutamate--cysteine ligase 2 (374 aa).

The protein belongs to the glutamate--cysteine ligase type 2 family. YbdK subfamily.

It catalyses the reaction L-cysteine + L-glutamate + ATP = gamma-L-glutamyl-L-cysteine + ADP + phosphate + H(+). Its function is as follows. ATP-dependent carboxylate-amine ligase which exhibits weak glutamate--cysteine ligase activity. This is Putative glutamate--cysteine ligase 2 from Acidovorax ebreus (strain TPSY) (Diaphorobacter sp. (strain TPSY)).